Reading from the N-terminus, the 295-residue chain is Pyridoxal 5'-phosphate synthase subunit PdxS (295 aa).

Asp-25 serves as a coordination point for D-ribose 5-phosphate. Lys-82 serves as the catalytic Schiff-base intermediate with D-ribose 5-phosphate. Residue Gly-154 participates in D-ribose 5-phosphate binding. Arg-166 lines the D-glyceraldehyde 3-phosphate pocket. Residues Gly-215 and 236–237 each bind D-ribose 5-phosphate; that span reads GS.

This sequence belongs to the PdxS/SNZ family. In the presence of PdxT, forms a dodecamer of heterodimers.

It catalyses the reaction aldehydo-D-ribose 5-phosphate + D-glyceraldehyde 3-phosphate + L-glutamine = pyridoxal 5'-phosphate + L-glutamate + phosphate + 3 H2O + H(+). It functions in the pathway cofactor biosynthesis; pyridoxal 5'-phosphate biosynthesis. In terms of biological role, catalyzes the formation of pyridoxal 5'-phosphate from ribose 5-phosphate (RBP), glyceraldehyde 3-phosphate (G3P) and ammonia. The ammonia is provided by the PdxT subunit. Can also use ribulose 5-phosphate and dihydroxyacetone phosphate as substrates, resulting from enzyme-catalyzed isomerization of RBP and G3P, respectively. This chain is Pyridoxal 5'-phosphate synthase subunit PdxS, found in Actinobacillus pleuropneumoniae serotype 3 (strain JL03).